The primary structure comprises 130 residues: Small ribosomal subunit protein uS11 (130 aa).

Belongs to the universal ribosomal protein uS11 family. As to quaternary structure, part of the 30S ribosomal subunit. Interacts with proteins S7 and S18. Binds to IF-3.

Its function is as follows. Located on the platform of the 30S subunit, it bridges several disparate RNA helices of the 16S rRNA. Forms part of the Shine-Dalgarno cleft in the 70S ribosome. The sequence is that of Small ribosomal subunit protein uS11 from Helicobacter hepaticus (strain ATCC 51449 / 3B1).